We begin with the raw amino-acid sequence, 87 residues long: U3-theraphotoxin-Hhn1q (87 aa).

The first 24 residues, 1 to 24, serve as a signal peptide directing secretion; sequence MVNMKASMFLTFAGLVLLFVVCYA. Residues 25 to 52 constitute a propeptide that is removed on maturation; the sequence is SESEEKEFPKEMLSSIFAVDNDFKQEER. 3 disulfides stabilise this stretch: Cys54-Cys67, Cys61-Cys72, and Cys66-Cys79.

It belongs to the neurotoxin 10 (Hwtx-1) family. 51 (Hntx-8) subfamily. Hntx-8 sub-subfamily. In terms of tissue distribution, expressed by the venom gland.

It is found in the secreted. In terms of biological role, ion channel inhibitor. The polypeptide is U3-theraphotoxin-Hhn1q (Cyriopagopus hainanus (Chinese bird spider)).